The chain runs to 376 residues: Serpin B6 (376 aa).

Residue Met1 is modified to N-acetylmethionine. Residue Ser151 is modified to Phosphoserine. N6-acetyllysine is present on Lys195.

It belongs to the serpin family. Ov-serpin subfamily. Forms a complex with the monomeric form of beta-tryptase.

It localises to the cytoplasm. Inhibitor of cathepsin G, kallikrein-8 and thrombin. May play an important role in the inner ear in the protection against leakage of lysosomal content during stress. May be involved in the regulation of serine proteinases present in the brain or extravasated from the blood. This chain is Serpin B6 (SERPINB6), found in Macaca fascicularis (Crab-eating macaque).